Reading from the N-terminus, the 227-residue chain is MAYPFQLGFQDATSPIMEELLHFHDHTLMIVFLISSLVLYIISSMLTTKLTHTSTMDAQEVETIWTILPAIILILIALPSLRILYMMDEINNPSLTVKTMGHQWYWSYEYTDYEDLTFDSYMIPTSDLKPGELRLLEVDNRVVLPMEMTIRMLISSEDVLHSWAVPSLGLKTDAIPGRLNQTTLVASRPGLYYGQCSEICGSNHSFMPIVLELVPLKYFEEWSASML.

The Mitochondrial intermembrane segment spans residues 1 to 14; that stretch reads MAYPFQLGFQDATS. The chain crosses the membrane as a helical span at residues 15–45; sequence PIMEELLHFHDHTLMIVFLISSLVLYIISSM. Residues 46–59 are Mitochondrial matrix-facing; that stretch reads LTTKLTHTSTMDAQ. A helical membrane pass occupies residues 60-87; it reads EVETIWTILPAIILILIALPSLRILYMM. Topologically, residues 88–227 are mitochondrial intermembrane; that stretch reads DEINNPSLTV…YFEEWSASML (140 aa). The Cu cation site is built by His-161, Cys-196, Glu-198, Cys-200, His-204, and Met-207. A Mg(2+)-binding site is contributed by Glu-198.

This sequence belongs to the cytochrome c oxidase subunit 2 family. Component of the cytochrome c oxidase (complex IV, CIV), a multisubunit enzyme composed of 14 subunits. The complex is composed of a catalytic core of 3 subunits MT-CO1, MT-CO2 and MT-CO3, encoded in the mitochondrial DNA, and 11 supernumerary subunits COX4I, COX5A, COX5B, COX6A, COX6B, COX6C, COX7A, COX7B, COX7C, COX8 and NDUFA4, which are encoded in the nuclear genome. The complex exists as a monomer or a dimer and forms supercomplexes (SCs) in the inner mitochondrial membrane with NADH-ubiquinone oxidoreductase (complex I, CI) and ubiquinol-cytochrome c oxidoreductase (cytochrome b-c1 complex, complex III, CIII), resulting in different assemblies (supercomplex SCI(1)III(2)IV(1) and megacomplex MCI(2)III(2)IV(2)). Found in a complex with TMEM177, COA6, COX18, COX20, SCO1 and SCO2. Interacts with TMEM177 in a COX20-dependent manner. Interacts with COX20. Interacts with COX16. The cofactor is Cu cation.

The protein resides in the mitochondrion inner membrane. The catalysed reaction is 4 Fe(II)-[cytochrome c] + O2 + 8 H(+)(in) = 4 Fe(III)-[cytochrome c] + 2 H2O + 4 H(+)(out). Functionally, component of the cytochrome c oxidase, the last enzyme in the mitochondrial electron transport chain which drives oxidative phosphorylation. The respiratory chain contains 3 multisubunit complexes succinate dehydrogenase (complex II, CII), ubiquinol-cytochrome c oxidoreductase (cytochrome b-c1 complex, complex III, CIII) and cytochrome c oxidase (complex IV, CIV), that cooperate to transfer electrons derived from NADH and succinate to molecular oxygen, creating an electrochemical gradient over the inner membrane that drives transmembrane transport and the ATP synthase. Cytochrome c oxidase is the component of the respiratory chain that catalyzes the reduction of oxygen to water. Electrons originating from reduced cytochrome c in the intermembrane space (IMS) are transferred via the dinuclear copper A center (CU(A)) of subunit 2 and heme A of subunit 1 to the active site in subunit 1, a binuclear center (BNC) formed by heme A3 and copper B (CU(B)). The BNC reduces molecular oxygen to 2 water molecules using 4 electrons from cytochrome c in the IMS and 4 protons from the mitochondrial matrix. This is Cytochrome c oxidase subunit 2 (MT-CO2) from Equus asinus (Donkey).